Consider the following 266-residue polypeptide: Undecaprenyl-diphosphatase 1 (266 aa).

8 helical membrane-spanning segments follow: residues 1–21, 39–59, 87–107, 114–134, 149–169, 183–203, 218–238, and 246–266; these read MDTFQVIILALIQGLTEFLPI, QGLSFDVAVNTGSLFAVVIYF, WWIILATLPAVFFGFMAKDFI, TGVIAVTTVVFGLLLWWADKM, ALLIGFAQALALIPGTSRSGA, AAARFSFLMSVPVSLGAAILV, ALTLGTVISFAAAYLCIHYFL, and MTPFVIYRLALGAVLCGFIFL.

Belongs to the UppP family.

The protein localises to the cell inner membrane. The catalysed reaction is di-trans,octa-cis-undecaprenyl diphosphate + H2O = di-trans,octa-cis-undecaprenyl phosphate + phosphate + H(+). Functionally, catalyzes the dephosphorylation of undecaprenyl diphosphate (UPP). Confers resistance to bacitracin. The sequence is that of Undecaprenyl-diphosphatase 1 from Shewanella oneidensis (strain ATCC 700550 / JCM 31522 / CIP 106686 / LMG 19005 / NCIMB 14063 / MR-1).